A 349-amino-acid chain; its full sequence is MASDDRPLALTLGDPSGIGPEIALAAWQLRSERGVPPFQLIGDPEFLEATAYRLGLSVPVAEVEPDDACEVFPRALPVLPLPSGAKVIATPGAPDSANAGAIVESITAAVDLVRSGAASAVVTNPIAKFVLTRVGFAHPGHTEFLAALAAREGREPSLPVMMIWSDTLAVVPVTIHVALRRVPELLTQDLVERTARIVHADLRARFGLEHPRLVLSGLNPHAGESGTMGTEDRDVLAPAVAVLRSEGIDIRGPLPADTLFHERARATYDVALTPTHDQALIPVKTLAFDEGVNVTLGLPFVRTSPDHGTAFDIAGKGLAKPDSLIAALRLAHRLAHRPADTVLPFPARA.

Histidine 141 and threonine 142 together coordinate substrate. Residues histidine 176, histidine 221, and histidine 276 each coordinate a divalent metal cation. Substrate contacts are provided by lysine 284, asparagine 293, and arginine 302.

Belongs to the PdxA family. As to quaternary structure, homodimer. The cofactor is Zn(2+). It depends on Mg(2+) as a cofactor. Co(2+) serves as cofactor.

Its subcellular location is the cytoplasm. The enzyme catalyses 4-(phosphooxy)-L-threonine + NAD(+) = 3-amino-2-oxopropyl phosphate + CO2 + NADH. It functions in the pathway cofactor biosynthesis; pyridoxine 5'-phosphate biosynthesis; pyridoxine 5'-phosphate from D-erythrose 4-phosphate: step 4/5. Functionally, catalyzes the NAD(P)-dependent oxidation of 4-(phosphooxy)-L-threonine (HTP) into 2-amino-3-oxo-4-(phosphooxy)butyric acid which spontaneously decarboxylates to form 3-amino-2-oxopropyl phosphate (AHAP). The chain is 4-hydroxythreonine-4-phosphate dehydrogenase from Methylorubrum extorquens (strain CM4 / NCIMB 13688) (Methylobacterium extorquens).